A 551-amino-acid polypeptide reads, in one-letter code: Palmdelphin (551 aa).

The residue at position 1 (methionine 1) is an N-acetylmethionine. A coiled-coil region spans residues 2–106 (EEAELVKERL…LQISTNEEAI (105 aa)). Lysine 125 is covalently cross-linked (Glycyl lysine isopeptide (Lys-Gly) (interchain with G-Cter in SUMO2)). Serine 135 carries the post-translational modification Phosphoserine. A Glycyl lysine isopeptide (Lys-Gly) (interchain with G-Cter in SUMO1); alternate cross-link involves residue lysine 179. A Glycyl lysine isopeptide (Lys-Gly) (interchain with G-Cter in SUMO2); alternate cross-link involves residue lysine 179. Positions 247–259 (SERNSKSPTEYHD) are enriched in basic and acidic residues. Disordered regions lie at residues 247–393 (SERN…EDEE) and 450–529 (EEEE…IAGD). Threonine 271 bears the Phosphothreonine mark. Serine 321, serine 370, serine 384, and serine 385 each carry phosphoserine. The segment covering 484 to 495 (KRAEVNPHENTN) has biased composition (basic and acidic residues). A phosphoserine mark is found at serine 498, serine 515, and serine 520.

The protein belongs to the paralemmin family. Interacts with GLUL. Cell projection, dendrite. Cell projection, dendritic spine. Post-translationally, phosphorylated.

It is found in the cytoplasm. It localises to the cell projection. Its subcellular location is the dendrite. The protein resides in the dendritic spine. This is Palmdelphin (PALMD) from Sus scrofa (Pig).